Consider the following 827-residue polypeptide: Putative potassium transporter 12 (827 aa).

The tract at residues 1-31 (MEEIEEGSSNNSIRRVGTGSSDRRWVDGSEV) is disordered. The Cytoplasmic segment spans residues 1–82 (MEEIEEGSSN…AGSHGHNLKD (82 aa)). Residues 83–103 (LSLLTTLGIAFQTLGVVYGDM) form a helical membrane-spanning segment. Residues 104–129 (GTSPLYVFSDVFSKVPIRSEVDVLGA) lie on the Extracellular side of the membrane. A helical membrane pass occupies residues 130–150 (LSLVIYTIAVIPLAKYVFVVL). The Cytoplasmic segment spans residues 151–216 (KANDNGEGGT…ALETKGYLKT (66 aa)). Residues 217–237 (LLLLLVLMGTSMIIGDGILTP) form a helical membrane-spanning segment. At 238–253 (AMSVMSAMSGLQGEVK) the chain is on the extracellular side. A helical membrane pass occupies residues 254–274 (GFGTNALVMSSIVILVALFSI). Residues 275–281 (QRFGTGK) lie on the Cytoplasmic side of the membrane. A helical membrane pass occupies residues 282–302 (VGFLFAPVLALWFFSLGAIGI). At 303–335 (YNLLKYDFTVIRALNPFYIVLFFNKNSKQAWSA) the chain is on the extracellular side. The helical transmembrane segment at 336 to 356 (LGGCVLCITGAEAMFADLGHF) threads the bilayer. Topologically, residues 357-363 (SVRSIQM) are cytoplasmic. A helical transmembrane segment spans residues 364–384 (AFTCVVFPCLLLAYMGQAAYL). The Extracellular portion of the chain corresponds to 385–402 (TKHPEASARIFYDSVPKS). A helical transmembrane segment spans residues 403–423 (LFWPVFVIATLAAMIASQAMI). Residues 424–454 (SATFSCVKQAMALGCFPRLKIIHTSKKRIGQ) lie on the Cytoplasmic side of the membrane. A helical transmembrane segment spans residues 455–475 (IYIPVINWFLMIMCILVVSIF). The Extracellular segment spans residues 476-480 (RSTTH). Helical transmembrane passes span 481 to 501 (IANAYGIAEVGVMMVSTVLVT) and 502 to 522 (LVMLLIWQTNIFLALCFPLIF). Residues 523 to 536 (GSVETIYLLAVLTK) are Extracellular-facing. A helical transmembrane segment spans residues 537–557 (ILEGGWVPLVFATFFLTVMYI). Over 558–827 (WNYGSVLKYQ…ILQAGMTYMV (270 aa)) the chain is Cytoplasmic. A disordered region spans residues 728-750 (RSEPEQELDSEVLPSSSVGSSME). The span at 738–748 (EVLPSSSVGSS) shows a compositional bias: low complexity.

Belongs to the HAK/KUP transporter (TC 2.A.72.3) family.

The protein resides in the cell membrane. Putative potassium transporter. The polypeptide is Putative potassium transporter 12 (POT12) (Arabidopsis thaliana (Mouse-ear cress)).